The primary structure comprises 123 residues: MPTIQQLIRKPRQPKIKRSKSQHMEGCPQKRGVCTRVYTTTPKKPNSAMRKVAKVRLTNGYEVISYIPGESHNLQEHSVVLIRGGRVKDLPGVRYHILRGVLDTQGVKDRRQRRSKYGAKRPK.

A disordered region spans residues 1 to 30 (MPTIQQLIRKPRQPKIKRSKSQHMEGCPQK). Residues 9–21 (RKPRQPKIKRSKS) are compositionally biased toward basic residues. Residue Asp89 is modified to 3-methylthioaspartic acid. Residues 104–123 (TQGVKDRRQRRSKYGAKRPK) form a disordered region. Residues 110–123 (RRQRRSKYGAKRPK) are compositionally biased toward basic residues.

The protein belongs to the universal ribosomal protein uS12 family. In terms of assembly, part of the 30S ribosomal subunit. Contacts proteins S8 and S17. May interact with IF1 in the 30S initiation complex.

Functionally, with S4 and S5 plays an important role in translational accuracy. Interacts with and stabilizes bases of the 16S rRNA that are involved in tRNA selection in the A site and with the mRNA backbone. Located at the interface of the 30S and 50S subunits, it traverses the body of the 30S subunit contacting proteins on the other side and probably holding the rRNA structure together. The combined cluster of proteins S8, S12 and S17 appears to hold together the shoulder and platform of the 30S subunit. The chain is Small ribosomal subunit protein uS12 from Jannaschia sp. (strain CCS1).